Here is a 73-residue protein sequence, read N- to C-terminus: Small ribosomal subunit protein bS18 (73 aa).

The protein belongs to the bacterial ribosomal protein bS18 family. In terms of assembly, part of the 30S ribosomal subunit. Forms a tight heterodimer with protein bS6.

Functionally, binds as a heterodimer with protein bS6 to the central domain of the 16S rRNA, where it helps stabilize the platform of the 30S subunit. The chain is Small ribosomal subunit protein bS18 from Prochlorococcus marinus subsp. pastoris (strain CCMP1986 / NIES-2087 / MED4).